We begin with the raw amino-acid sequence, 892 residues long: DNA mismatch repair protein MutS (892 aa).

Glycine 607–serine 614 lines the ATP pocket.

It belongs to the DNA mismatch repair MutS family.

In terms of biological role, this protein is involved in the repair of mismatches in DNA. It is possible that it carries out the mismatch recognition step. This protein has a weak ATPase activity. In Bacillus cereus (strain AH820), this protein is DNA mismatch repair protein MutS.